Consider the following 491-residue polypeptide: Acetyl-coenzyme A carboxylase carboxyl transferase subunit beta, chloroplastic (491 aa).

Residues 28 to 56 (LGPIENTSESEDPNRNDMKKNSHSWGSRD) are disordered. Residues 223 to 491 (LWVQCENCYG…FPLNKNSIEH (269 aa)) enclose the CoA carboxyltransferase N-terminal domain. Residues Cys-227, Cys-230, Cys-246, and Cys-249 each coordinate Zn(2+). A C4-type zinc finger spans residues 227-249 (CENCYGLNYKKILKSKMNLCEQC).

The protein belongs to the AccD/PCCB family. As to quaternary structure, acetyl-CoA carboxylase is a heterohexamer composed of biotin carboxyl carrier protein, biotin carboxylase and 2 subunits each of ACCase subunit alpha and ACCase plastid-coded subunit beta (accD). Zn(2+) serves as cofactor.

The protein localises to the plastid. Its subcellular location is the chloroplast stroma. It catalyses the reaction N(6)-carboxybiotinyl-L-lysyl-[protein] + acetyl-CoA = N(6)-biotinyl-L-lysyl-[protein] + malonyl-CoA. The protein operates within lipid metabolism; malonyl-CoA biosynthesis; malonyl-CoA from acetyl-CoA: step 1/1. In terms of biological role, component of the acetyl coenzyme A carboxylase (ACC) complex. Biotin carboxylase (BC) catalyzes the carboxylation of biotin on its carrier protein (BCCP) and then the CO(2) group is transferred by the transcarboxylase to acetyl-CoA to form malonyl-CoA. The chain is Acetyl-coenzyme A carboxylase carboxyl transferase subunit beta, chloroplastic from Daucus carota (Wild carrot).